A 295-amino-acid chain; its full sequence is Pyridoxal 5'-phosphate synthase subunit PdxS (295 aa).

D-ribose 5-phosphate is bound at residue D25. The Schiff-base intermediate with D-ribose 5-phosphate role is filled by K82. G154 contacts D-ribose 5-phosphate. R166 lines the D-glyceraldehyde 3-phosphate pocket. D-ribose 5-phosphate contacts are provided by residues G215 and 236-237 (GS).

This sequence belongs to the PdxS/SNZ family. In terms of assembly, in the presence of PdxT, forms a dodecamer of heterodimers.

It carries out the reaction aldehydo-D-ribose 5-phosphate + D-glyceraldehyde 3-phosphate + L-glutamine = pyridoxal 5'-phosphate + L-glutamate + phosphate + 3 H2O + H(+). Its pathway is cofactor biosynthesis; pyridoxal 5'-phosphate biosynthesis. Functionally, catalyzes the formation of pyridoxal 5'-phosphate from ribose 5-phosphate (RBP), glyceraldehyde 3-phosphate (G3P) and ammonia. The ammonia is provided by the PdxT subunit. Can also use ribulose 5-phosphate and dihydroxyacetone phosphate as substrates, resulting from enzyme-catalyzed isomerization of RBP and G3P, respectively. This chain is Pyridoxal 5'-phosphate synthase subunit PdxS, found in Actinobacillus pleuropneumoniae serotype 5b (strain L20).